The sequence spans 409 residues: Gamma-glutamyl phosphate reductase (409 aa).

The protein belongs to the gamma-glutamyl phosphate reductase family.

Its subcellular location is the cytoplasm. It catalyses the reaction L-glutamate 5-semialdehyde + phosphate + NADP(+) = L-glutamyl 5-phosphate + NADPH + H(+). It functions in the pathway amino-acid biosynthesis; L-proline biosynthesis; L-glutamate 5-semialdehyde from L-glutamate: step 2/2. Its function is as follows. Catalyzes the NADPH-dependent reduction of L-glutamate 5-phosphate into L-glutamate 5-semialdehyde and phosphate. The product spontaneously undergoes cyclization to form 1-pyrroline-5-carboxylate. The chain is Gamma-glutamyl phosphate reductase from Mycobacterium leprae (strain TN).